The sequence spans 140 residues: uncharacterized protein (140 aa).

This is an uncharacterized protein from Neurospora crassa (strain ATCC 24698 / 74-OR23-1A / CBS 708.71 / DSM 1257 / FGSC 987).